Here is a 496-residue protein sequence, read N- to C-terminus: Cytochrome P450 monooxygenase ausR (496 aa).

The helical transmembrane segment at 12-32 (IGLYILWTIPVLFVIFKLLAP) threads the bilayer. Cys-435 provides a ligand contact to heme.

This sequence belongs to the cytochrome P450 family. It depends on heme as a cofactor.

The protein localises to the membrane. It participates in secondary metabolite biosynthesis; terpenoid biosynthesis. Cytochrome P450 monooxygenase; part of the gene cluster B that mediates the biosynthesis of the fungal meroterpenoid acetoxydehydroaustin. The first step of the pathway is the synthesis of 3,5-dimethylorsellinic acid by the polyketide synthase ausA. 3,5-dimethylorsellinic acid is then prenylated by the polyprenyl transferase ausN. Further epoxidation by the FAD-dependent monooxygenase ausM and cyclization by the probable terpene cyclase ausL lead to the formation of protoaustinoid A. Protoaustinoid A is then oxidized to spiro-lactone preaustinoid A3 by the combined action of the FAD-binding monooxygenases ausB and ausC, and the dioxygenase ausE. Acid-catalyzed keto-rearrangement and ring contraction of the tetraketide portion of preaustinoid A3 by ausJ lead to the formation of preaustinoid A4. The aldo-keto reductase ausK, with the help of ausH, is involved in the next step by transforming preaustinoid A4 into isoaustinone which is in turn hydroxylated by the P450 monooxygenase ausI to form austinolide. The cytochrome P450 monooxygenase ausG then modifies austinolide to austinol. Austinol is further acetylated to austin by the O-acetyltransferase ausP, which spontaneously changes to dehydroaustin. The cytochrome P450 monooxygenase then converts dehydroaustin is into 7-dehydrodehydroaustin. The hydroxylation catalyzed by ausR permits the second O-acetyltransferase ausQ to add an additional acetyl group to the molecule, leading to the formation of acetoxydehydroaustin. Due to genetic rearrangements of the clusters and the subsequent loss of some enzymes, the end product of the Penicillium brasilianum austinoid biosynthesis clusters is acetoxydehydroaustin. In Penicillium brasilianum, this protein is Cytochrome P450 monooxygenase ausR.